The following is a 198-amino-acid chain: Nucleoid occlusion factor SlmA (198 aa).

The HTH tetR-type domain occupies 9–70 (RNRREEILQS…SLIEFIEDSL (62 aa)). Positions 33–52 (TTAKLAASVGVSEAALYRHF) form a DNA-binding region, H-T-H motif. Positions 117–145 (EQDRLQGRINQLFERIEAQLRQVLREKKM) form a coiled coil.

This sequence belongs to the nucleoid occlusion factor SlmA family. In terms of assembly, homodimer. Interacts with FtsZ.

The protein resides in the cytoplasm. It localises to the nucleoid. Functionally, required for nucleoid occlusion (NO) phenomenon, which prevents Z-ring formation and cell division over the nucleoid. Acts as a DNA-associated cell division inhibitor that binds simultaneously chromosomal DNA and FtsZ, and disrupts the assembly of FtsZ polymers. SlmA-DNA-binding sequences (SBS) are dispersed on non-Ter regions of the chromosome, preventing FtsZ polymerization at these regions. The protein is Nucleoid occlusion factor SlmA of Cronobacter sakazakii (strain ATCC BAA-894) (Enterobacter sakazakii).